The sequence spans 101 residues: NAD(P)H-quinone oxidoreductase subunit 4L, chloroplastic (101 aa).

3 helical membrane passes run 2–22 (MLEHVLVLSAYLFSIGIYGLI), 32–52 (MCLELILNAVNINFVTFSDFF), and 61–81 (IFSIFVIAIAAAEAAIGPAIV).

It belongs to the complex I subunit 4L family. NDH is composed of at least 16 different subunits, 5 of which are encoded in the nucleus.

The protein resides in the plastid. It is found in the chloroplast thylakoid membrane. It carries out the reaction a plastoquinone + NADH + (n+1) H(+)(in) = a plastoquinol + NAD(+) + n H(+)(out). The enzyme catalyses a plastoquinone + NADPH + (n+1) H(+)(in) = a plastoquinol + NADP(+) + n H(+)(out). NDH shuttles electrons from NAD(P)H:plastoquinone, via FMN and iron-sulfur (Fe-S) centers, to quinones in the photosynthetic chain and possibly in a chloroplast respiratory chain. The immediate electron acceptor for the enzyme in this species is believed to be plastoquinone. Couples the redox reaction to proton translocation, and thus conserves the redox energy in a proton gradient. In Morus indica (Mulberry), this protein is NAD(P)H-quinone oxidoreductase subunit 4L, chloroplastic.